The primary structure comprises 226 residues: Orotate phosphoribosyltransferase (226 aa).

Residues Arg107, Lys108, Lys111, and 133–141 (EDLTTDGGS) contribute to the 5-phospho-alpha-D-ribose 1-diphosphate site. Residue Thr137 participates in orotate binding.

Belongs to the purine/pyrimidine phosphoribosyltransferase family. PyrE subfamily. Homodimer. The cofactor is Mg(2+).

It carries out the reaction orotidine 5'-phosphate + diphosphate = orotate + 5-phospho-alpha-D-ribose 1-diphosphate. It functions in the pathway pyrimidine metabolism; UMP biosynthesis via de novo pathway; UMP from orotate: step 1/2. Functionally, catalyzes the transfer of a ribosyl phosphate group from 5-phosphoribose 1-diphosphate to orotate, leading to the formation of orotidine monophosphate (OMP). This is Orotate phosphoribosyltransferase from Ruegeria sp. (strain TM1040) (Silicibacter sp.).